The chain runs to 334 residues: DNA-directed RNA polymerase subunit alpha (334 aa).

An alpha N-terminal domain (alpha-NTD) region spans residues 1–232; sequence MIREKLKVST…DLFIPFLHAE (232 aa). Positions 267-334 are alpha C-terminal domain (alpha-CTD); the sequence is QKEITLKSIF…NILQIENHFV (68 aa).

This sequence belongs to the RNA polymerase alpha chain family. In plastids the minimal PEP RNA polymerase catalytic core is composed of four subunits: alpha, beta, beta', and beta''. When a (nuclear-encoded) sigma factor is associated with the core the holoenzyme is formed, which can initiate transcription.

Its subcellular location is the plastid. The protein resides in the chloroplast. It carries out the reaction RNA(n) + a ribonucleoside 5'-triphosphate = RNA(n+1) + diphosphate. In terms of biological role, DNA-dependent RNA polymerase catalyzes the transcription of DNA into RNA using the four ribonucleoside triphosphates as substrates. This chain is DNA-directed RNA polymerase subunit alpha, found in Pisum sativum (Garden pea).